Here is a 478-residue protein sequence, read N- to C-terminus: Growth/differentiation factor 10 (478 aa).

The N-terminal stretch at 1–33 (MAHVPARTSPGPGPQLLLLLLPLFLLLLRDVAG) is a signal peptide. Residues 34 to 368 (SHRAPAWSAL…EKTMQKARRK (335 aa)) constitute a propeptide that is removed on maturation. 3 N-linked (GlcNAc...) asparagine glycosylation sites follow: N118, N156, and N281. The disordered stretch occupies residues 266 to 319 (YDPFPAGDPEPRAAPNNSADPRVRRAAQATGPLQDNELPGLDERPPRAHAQHFH). Intrachain disulfides connect C376–C443, C405–C475, and C409–C477. N469 is a glycosylation site (N-linked (GlcNAc...) asparagine).

It belongs to the TGF-beta family. Homodimer or heterodimer. Can form a non-covalent complex of the mature region and the pro-region. Expressed in femur, brain, lung, skeletal muscle, pancreas and testis.

The protein localises to the secreted. Its function is as follows. Growth factor involved in osteogenesis and adipogenesis. Plays an inhibitory role in the process of osteoblast differentiation via SMAD2/3 pathway. Plays an inhibitory role in the process of adipogenesis. This Homo sapiens (Human) protein is Growth/differentiation factor 10.